A 119-amino-acid chain; its full sequence is EVKLLESGGGLVQPGGSLKLSCAASGFDFSRYWMSWVRQAPGKGLEWIGEINPDSSTINYTPSLKDKFIISRDNAKNTLYLQMSKVRSEDTALYYCARLGYYGYFDVWGAGTTVTVSSE.

The 112-residue stretch at 1–112 folds into the Ig-like domain; sequence EVKLLESGGG…GYFDVWGAGT (112 aa).

In Mus musculus (Mouse), this protein is Ig heavy chain V region T601.